Consider the following 302-residue polypeptide: Uricase (302 aa).

The residue at position 2 (serine 2) is an N-acetylserine. Catalysis depends on charge relay system residues lysine 11 and threonine 58. Positions 58, 59, 160, 177, 228, 229, and 255 each coordinate 5-hydroxyisourate. Threonine 58 contacts O2. The urate site is built by threonine 58, aspartate 59, phenylalanine 160, arginine 177, valine 228, glutamine 229, and asparagine 255. O2 is bound at residue asparagine 255. The Charge relay system role is filled by histidine 257. A Microbody targeting signal motif is present at residues 300-302; the sequence is SKL.

This sequence belongs to the uricase family. As to quaternary structure, homotetramer.

The protein resides in the peroxisome. The enzyme catalyses urate + O2 + H2O = 5-hydroxyisourate + H2O2. The protein operates within purine metabolism; urate degradation; (S)-allantoin from urate: step 1/3. Its activity is regulated as follows. 8-Azaxanthine is one of the most potent competitive inhibitors of uricase activity. Hypoxanthine has only a small inhibitor effect, and caffeine has no effect at all. Azide not only competes with dioxygen but also competes with the substrate for its enzymatic site. Urate oxidase is a cofactorless enzyme involved in the metabolism of purines. Catalyzes, in the presence of molecular oxygen, the hydroxylation of uric acid to metastable 5-hydroxyisourate (5-HIU) which is further degraded to allantoin. This is Uricase from Aspergillus flavus.